Consider the following 215-residue polypeptide: Proteasome subunit beta type-1 (215 aa).

M1 carries the post-translational modification N-acetylmethionine. Residues 1–19 constitute a propeptide, removed in mature form; it reads MNGIQVDINRLKKGEVSLG. Catalysis depends on T20, which acts as the Nucleophile.

The protein belongs to the peptidase T1B family. As to quaternary structure, the 26S proteasome consists of a 20S proteasome core and two 19S regulatory subunits. The 20S proteasome core is composed of 28 subunits that are arranged in four stacked rings, resulting in a barrel-shaped structure. The two end rings are each formed by seven alpha subunits, and the two central rings are each formed by seven beta subunits. The catalytic chamber with the active sites is on the inside of the barrel.

The protein resides in the cytoplasm. The protein localises to the nucleus. The enzyme catalyses Cleavage of peptide bonds with very broad specificity.. Its function is as follows. The proteasome degrades poly-ubiquitinated proteins in the cytoplasm and in the nucleus. It is essential for the regulated turnover of proteins and for the removal of misfolded proteins. The proteasome is a multicatalytic proteinase complex that is characterized by its ability to cleave peptides with Arg, Phe, Tyr, Leu, and Glu adjacent to the leaving group at neutral or slightly basic pH. It has an ATP-dependent proteolytic activity. PRE3 and PRE4 are necessary for the peptidyl-glutamyl-peptide-hydrolyzing activity. This subunit is necessary for the peptidylglutamyl-peptide hydrolyzing activity. The protein is Proteasome subunit beta type-1 (PRE3) of Saccharomyces cerevisiae (strain ATCC 204508 / S288c) (Baker's yeast).